The primary structure comprises 176 residues: Centromere protein R (176 aa).

Residue Lys8 forms a Glycyl lysine isopeptide (Lys-Gly) (interchain with G-Cter in SUMO2) linkage. A Phosphoserine modification is found at Ser17. Positions 20–50 (PSKIMRKKSITAFSPTTGTYQLSPFSSPRTP) are DD1. Lys22 participates in a covalent cross-link: Glycyl lysine isopeptide (Lys-Gly) (interchain with G-Cter in SUMO2). Residue Ser28 is modified to Phosphoserine. Residues 34 to 48 (PTTGTYQLSPFSSPR) show a composition bias toward polar residues. A disordered region spans residues 34-80 (PTTGTYQLSPFSSPRTPKEQEHRDGPSNGTRKWSVLSSPARQDSTVK). Over residues 49–58 (TPKEQEHRDG) the composition is skewed to basic and acidic residues. Positions 60–80 (SNGTRKWSVLSSPARQDSTVK) are enriched in polar residues. The Nuclear localization signal signature appears at 63-66 (TRKW). At Ser71 the chain carries Phosphoserine. The stretch at 82–112 (SDGFMMLLSKIERSSEKTMEIMKNLSSLQAL) forms a coiled coil. An LXXLL motif motif is present at residues 118-122 (LEDLL). Positions 171–175 (LKAIL) match the LXXIL motif motif.

Homodimer; mediated by the coiled coil domain. Interacts with CCNA2 and MTA1. Interacts with NFKB1 NF-kappa-B subunit. Component of the CENPA-CAD complex, composed of CENPI, CENPK, CENPL, CENPO, CENPP, CENPQ, CENPR and CENPS. The CENPA-CAD complex interacts with the CENPA-NAC complex, at least composed of CENPA, CENPC, CENPH, CENPM, CENPN, CENPT and CENPU. Interacts with TASOR.

The protein localises to the nucleus. Its subcellular location is the chromosome. The protein resides in the centromere. It is found in the kinetochore. Functionally, transcription coregulator that can have both coactivator and corepressor functions. Involved in the coactivation of nuclear receptors for retinoid X (RXRs) and thyroid hormone (TRs) in a ligand-dependent fashion. In contrast, it does not coactivate nuclear receptors for retinoic acid, vitamin D, progesterone receptor, nor glucocorticoid. Acts as a coactivator for estrogen receptor alpha. Acts as a transcriptional corepressor via its interaction with the NFKB1 NF-kappa-B subunit, possibly by interfering with the transactivation domain of NFKB1. Induces apoptosis in breast cancer cells, but not in other cancer cells, via a caspase-2 mediated pathway that involves mitochondrial membrane permeabilization but does not require other caspases. May also act as an inhibitor of cyclin A-associated kinase. Also acts a component of the CENPA-CAD (nucleosome distal) complex, a complex recruited to centromeres which is involved in assembly of kinetochore proteins, mitotic progression and chromosome segregation. May be involved in incorporation of newly synthesized CENPA into centromeres via its interaction with the CENPA-NAC complex. The sequence is that of Centromere protein R (Itgb3bp) from Rattus norvegicus (Rat).